The chain runs to 71 residues: uncharacterized protein (71 aa).

The segment at 1-20 (MQKLNKHLKKKKQKRKKMKK) is disordered.

This is an uncharacterized protein from Methanocaldococcus jannaschii (strain ATCC 43067 / DSM 2661 / JAL-1 / JCM 10045 / NBRC 100440) (Methanococcus jannaschii).